A 102-amino-acid chain; its full sequence is Aspartyl/glutamyl-tRNA(Asn/Gln) amidotransferase subunit C (102 aa).

Belongs to the GatC family. As to quaternary structure, heterotrimer of A, B and C subunits.

It carries out the reaction L-glutamyl-tRNA(Gln) + L-glutamine + ATP + H2O = L-glutaminyl-tRNA(Gln) + L-glutamate + ADP + phosphate + H(+). The catalysed reaction is L-aspartyl-tRNA(Asn) + L-glutamine + ATP + H2O = L-asparaginyl-tRNA(Asn) + L-glutamate + ADP + phosphate + 2 H(+). In terms of biological role, allows the formation of correctly charged Asn-tRNA(Asn) or Gln-tRNA(Gln) through the transamidation of misacylated Asp-tRNA(Asn) or Glu-tRNA(Gln) in organisms which lack either or both of asparaginyl-tRNA or glutaminyl-tRNA synthetases. The reaction takes place in the presence of glutamine and ATP through an activated phospho-Asp-tRNA(Asn) or phospho-Glu-tRNA(Gln). This is Aspartyl/glutamyl-tRNA(Asn/Gln) amidotransferase subunit C from Bordetella pertussis (strain Tohama I / ATCC BAA-589 / NCTC 13251).